The chain runs to 87 residues: Selenoprotein W (87 aa).

Residues 10 to 13 (CGAU) constitute a cross-link (cysteinyl-selenocysteine (Cys-Sec); redox-active). A non-standard amino acid (selenocysteine) is located at residue Sec13. Cys37 is subject to S-glutathionyl cysteine.

This sequence belongs to the SelWTH family. Selenoprotein W subfamily. As to quaternary structure, interacts with DPYSL2, PRDX1, YWHAB, YWHAG, HSP70 and HSP90.

The protein localises to the cytoplasm. In terms of biological role, plays a role as a glutathione (GSH)-dependent antioxidant. May be involved in a redox-related process. May play a role in the myopathies of selenium deficiency. The protein is Selenoprotein W of Sus scrofa (Pig).